A 206-amino-acid chain; its full sequence is Macrophage immunometabolism regulator (206 aa).

At M1 the chain carries N-acetylmethionine. Positions 1–41 are disordered; that stretch reads MEVDINGESRSTLTTLPFPGAEANSPGKAEAEKPRCSSTPC. Phosphoserine occurs at positions 25, 140, and 167.

This sequence belongs to the UNC119-binding protein family. In terms of assembly, interacts with UNC119 and UNC119B; interaction preferentially takes place when UNC119 and UNC119B are unliganded with myristoylated proteins.

It localises to the cytoplasm. Its subcellular location is the cell projection. The protein localises to the cilium. Regulates the macrophage function, by enhancing the resolution of inflammation and wound repair functions mediated by M2 macrophages. The regulation of macrophage function is, due at least in part, to its ability to inhibit glycolysis. May also play a role in trafficking of proteins via its interaction with UNC119 and UNC119B cargo adapters: may help the release of UNC119 and UNC119B cargo or the recycling of UNC119 and UNC119B. May play a role in ciliary membrane localization via its interaction with UNC119B and protein transport into photoreceptor cells. The chain is Macrophage immunometabolism regulator (MACIR) from Pongo abelii (Sumatran orangutan).